Reading from the N-terminus, the 262-residue chain is Type III pantothenate kinase (262 aa).

Residue 6-13 coordinates ATP; it reads DVGNTNAV. Substrate-binding positions include Y100 and 107–110; that span reads GADR. Residue D109 is the Proton acceptor of the active site. D129 is a binding site for K(+). T132 contacts ATP. T184 serves as a coordination point for substrate.

It belongs to the type III pantothenate kinase family. As to quaternary structure, homodimer. The cofactor is NH4(+). K(+) serves as cofactor.

It is found in the cytoplasm. It catalyses the reaction (R)-pantothenate + ATP = (R)-4'-phosphopantothenate + ADP + H(+). It participates in cofactor biosynthesis; coenzyme A biosynthesis; CoA from (R)-pantothenate: step 1/5. Its function is as follows. Catalyzes the phosphorylation of pantothenate (Pan), the first step in CoA biosynthesis. The protein is Type III pantothenate kinase of Bacillus cereus (strain B4264).